Consider the following 87-residue polypeptide: U3-theraphotoxin-Hhn1n (87 aa).

Residues 1 to 24 (MVNMKASMFLTFAGLVLLFVVCYA) form the signal peptide. The propeptide occupies 25–52 (SESEEKEFPKEMLSSIFAVDNDFKQEER). 3 disulfides stabilise this stretch: Cys54/Cys67, Cys61/Cys72, and Cys66/Cys79.

This sequence belongs to the neurotoxin 10 (Hwtx-1) family. 51 (Hntx-8) subfamily. Hntx-8 sub-subfamily. In terms of tissue distribution, expressed by the venom gland.

Its subcellular location is the secreted. Weakly inhibits Kv11.1/KCNH2/ERG1, Kv1.2/KCNA2, Kv1.3/KCNA3, and Kv2.1/KCNB1. This is U3-theraphotoxin-Hhn1n from Cyriopagopus hainanus (Chinese bird spider).